Reading from the N-terminus, the 248-residue chain is MSFYRSSIISQIIKYNRRLAKSIICEDDSQIITLTAFVNQCLWCHKRVSVSAILLTTDNKILVCNRRDSFLYSEIIRTRNMYRKKRLFLNYSNYLNKQERSILSSFFSLDPATADNDRINAIYPGGIPKRGENVPECLSREIKEEVNIDNSFVFIDTRFFIHGIIEDTIINKFFEVIFFVGRISLTSDQIIDTFKSNHEIKDLIFLDPNSGNGLQYEIAKYALDTAKLKCYGHRGCYYESLKKLTEDD.

Positions 45–227 (HKRVSVSAIL…IAKYALDTAK (183 aa)) constitute a Nudix hydrolase domain. A Nudix box motif is present at residues 125–147 (GGIPKRGENVPECLSREIKEEVN).

This sequence belongs to the Nudix hydrolase family. As to quaternary structure, interacts with the late transcription elongation factor VLTF-4/OPG110. Interacts with the late transcription factors VLTF-1. It depends on Mg(2+) as a cofactor. Mn(2+) serves as cofactor.

Its subcellular location is the host mitochondrion. Its function is as follows. Acts with RNA polymerase to initiate transcription from late gene promoters. In Cynomys gunnisoni (Gunnison's prairie dog), this protein is mRNA-decapping protein OPG122 (OPG122).